The sequence spans 585 residues: Arginine--tRNA ligase (585 aa).

Positions 131-141 match the 'HIGH' region motif; it reads ANPTGPMHVGH.

This sequence belongs to the class-I aminoacyl-tRNA synthetase family. As to quaternary structure, monomer.

The protein localises to the cytoplasm. The catalysed reaction is tRNA(Arg) + L-arginine + ATP = L-arginyl-tRNA(Arg) + AMP + diphosphate. The polypeptide is Arginine--tRNA ligase (Bartonella tribocorum (strain CIP 105476 / IBS 506)).